Here is a 197-residue protein sequence, read N- to C-terminus: Imidazoleglycerol-phosphate dehydratase (197 aa).

Belongs to the imidazoleglycerol-phosphate dehydratase family.

The protein localises to the cytoplasm. It carries out the reaction D-erythro-1-(imidazol-4-yl)glycerol 3-phosphate = 3-(imidazol-4-yl)-2-oxopropyl phosphate + H2O. Its pathway is amino-acid biosynthesis; L-histidine biosynthesis; L-histidine from 5-phospho-alpha-D-ribose 1-diphosphate: step 6/9. In Thioalkalivibrio sulfidiphilus (strain HL-EbGR7), this protein is Imidazoleglycerol-phosphate dehydratase.